The sequence spans 1408 residues: ABC multidrug transporter MDR1 (1408 aa).

Residues Met1–Gly13 are compositionally biased toward low complexity. Residues Met1 to His103 are disordered. The segment covering Leu17 to His38 has biased composition (basic and acidic residues). The next 2 helical transmembrane spans lie at Phe147–Gly167 and Leu223–Trp243. Positions Val157–Lys464 constitute an ABC transmembrane type-1 1 domain. Residue Asn244 is glycosylated (N-linked (GlcNAc...) asparagine). A run of 4 helical transmembrane segments spans residues Lys296 to Val316, Leu321 to Thr341, Ile408 to Val428, and Gly436 to Ala456. Positions Ile499–Asn744 constitute an ABC transporter 1 domain. Gly534–Ser541 provides a ligand contact to ATP. A run of 2 helical transmembrane segments spans residues Ile838–Phe858 and Leu882–Phe902. Positions Ile838 to Lys1125 constitute an ABC transmembrane type-1 2 domain. An N-linked (GlcNAc...) asparagine glycan is attached at Asn934. 4 helical membrane-spanning segments follow: residues Gly952–Cys972, Ile973–Leu993, Gly1072–Gly1092, and Phe1099–Phe1119. Asn1127 and Asn1182 each carry an N-linked (GlcNAc...) asparagine glycan. An ABC transporter 2 domain is found at Val1162–Met1402. Gly1197–Ser1204 serves as a coordination point for ATP. Residue Asn1404 is glycosylated (N-linked (GlcNAc...) asparagine).

Belongs to the ABC transporter superfamily. ABCB family. Multidrug resistance exporter (TC 3.A.1.201) subfamily.

It is found in the cell membrane. It carries out the reaction itraconazole(in) + ATP + H2O = itraconazole(out) + ADP + phosphate + H(+). The enzyme catalyses voriconazole(in) + ATP + H2O = voriconazole(out) + ADP + phosphate + H(+). The catalysed reaction is fluconazole(in) + ATP + H2O = fluconazole(out) + ADP + phosphate + H(+). In terms of biological role, pleiotropic ABC efflux transporter that confers resistance to structurally and functionally unrelated compounds including azoles such as fluconazole (FLC), itraconazole (ITC), posaconazole (POS), nocodazole and voriconazole (VRC). In Cryptococcus deuterogattii (strain R265) (Cryptococcus gattii VGII (strain R265)), this protein is ABC multidrug transporter MDR1.